The following is a 434-amino-acid chain: Glutamate-1-semialdehyde 2,1-aminomutase 1 (434 aa).

N6-(pyridoxal phosphate)lysine is present on lysine 270.

This sequence belongs to the class-III pyridoxal-phosphate-dependent aminotransferase family. HemL subfamily. Homodimer. The cofactor is pyridoxal 5'-phosphate.

The protein resides in the cytoplasm. It carries out the reaction (S)-4-amino-5-oxopentanoate = 5-aminolevulinate. The protein operates within porphyrin-containing compound metabolism; protoporphyrin-IX biosynthesis; 5-aminolevulinate from L-glutamyl-tRNA(Glu): step 2/2. The protein is Glutamate-1-semialdehyde 2,1-aminomutase 1 of Bacillus thuringiensis subsp. konkukian (strain 97-27).